The following is a 330-amino-acid chain: Clavaminate synthase-like protein At3g21360 (330 aa).

The residue at position 2 (Ala2) is an N-acetylalanine. Residues His120, Glu122, and His313 each contribute to the Fe cation site.

The cofactor is Fe cation.

The sequence is that of Clavaminate synthase-like protein At3g21360 from Arabidopsis thaliana (Mouse-ear cress).